We begin with the raw amino-acid sequence, 268 residues long: MADQSIISALVLGLIEGLTEFIPVSSTAHVLLAGHFLGFKSPGNTFAVLIQLGAILAILLVYFQKLLSIALALPTSVKARRFVFSVLIAFLPAALIGAAAHGFIKAVLFETPMLICVVLIVGGVILYAIDRLPLQPRYTDVFDYPPSLALKIGLFQCLAMIPGTSRSGATIAGALLMGTDKRSAAEFSFFLAMPTMLGAFTLDLYKNRDALSFDDIGVIAIGFIAAFVAGIVVVRSLLDFVSHRGFTPFAIWRIVVGTAGLVGLWLVG.

A run of 7 helical transmembrane segments spans residues 5-25 (SIIS…IPVS), 43-63 (GNTF…LVYF), 84-104 (FSVL…HGFI), 106-126 (AVLF…GVIL), 184-204 (AAEF…TLDL), 213-233 (FDDI…GIVV), and 248-268 (PFAI…WLVG).

This sequence belongs to the UppP family.

It is found in the cell inner membrane. It catalyses the reaction di-trans,octa-cis-undecaprenyl diphosphate + H2O = di-trans,octa-cis-undecaprenyl phosphate + phosphate + H(+). In terms of biological role, catalyzes the dephosphorylation of undecaprenyl diphosphate (UPP). Confers resistance to bacitracin. This is Undecaprenyl-diphosphatase from Sinorhizobium fredii (strain NBRC 101917 / NGR234).